The following is a 436-amino-acid chain: MTNNTMLISLSTQPADARWGEKATLSVNEQGFTIHVGTTSLNGKAALATIQRAARKIDGQGIKHVKLAGEGWDLANSWAFWQGYRGPKGQRTVEWADLSDADKKELNDRLKIVDWVRDTINLPAEDLGPEQLATRAVDLLCDVACDAISYRITKGEDLREQNYAGLHTVGRGSERQPVLLALDYNPTGNADAPVFACLVGKGITFDTGGYSLKPSSSMDSMKSDMGGAATLTGALALAASRGLQQRVKLYLCCADNMVSGNAFRLGDIIRYRNGKTVEVMNTDAEGRLVLADGLIDASEQNPQWIIDCATLTGAAKMALGNDYHALFSFDDELVAALQESAKEENEPFWRLPLEEFHRSHLPSSFADLNNIASGANTAGASTAAAFLSHFVKNYQQGWLHIDCSATYRKSAVEQWATGATGLGVRTLANLLLSNAK.

Mn(2+) contacts are provided by Lys201 and Asp206. Residue Lys213 is part of the active site. Asp224, Asp283, and Glu285 together coordinate Mn(2+). The active site involves Arg287.

It belongs to the peptidase M17 family. Homohexamer. The cofactor is Mn(2+).

The protein resides in the cytoplasm. The catalysed reaction is Release of an N-terminal amino acid, Xaa, from a peptide or arylamide. Xaa is preferably Glu or Asp but may be other amino acids, including Leu, Met, His, Cys and Gln.. Functionally, probably plays an important role in intracellular peptide degradation. This chain is Peptidase B, found in Pectobacterium carotovorum subsp. carotovorum (strain PC1).